Reading from the N-terminus, the 155-residue chain is 6,7-dimethyl-8-ribityllumazine synthase (155 aa).

Residues Phe-24, 58-60, and 82-84 each bind 5-amino-6-(D-ribitylamino)uracil; these read AFE and VII. Residue 87–88 participates in (2S)-2-hydroxy-3-oxobutyl phosphate binding; the sequence is ST. Catalysis depends on His-90, which acts as the Proton donor. A 5-amino-6-(D-ribitylamino)uracil-binding site is contributed by Phe-115. Residue Arg-129 participates in (2S)-2-hydroxy-3-oxobutyl phosphate binding.

Belongs to the DMRL synthase family.

It carries out the reaction (2S)-2-hydroxy-3-oxobutyl phosphate + 5-amino-6-(D-ribitylamino)uracil = 6,7-dimethyl-8-(1-D-ribityl)lumazine + phosphate + 2 H2O + H(+). Its pathway is cofactor biosynthesis; riboflavin biosynthesis; riboflavin from 2-hydroxy-3-oxobutyl phosphate and 5-amino-6-(D-ribitylamino)uracil: step 1/2. Catalyzes the formation of 6,7-dimethyl-8-ribityllumazine by condensation of 5-amino-6-(D-ribitylamino)uracil with 3,4-dihydroxy-2-butanone 4-phosphate. This is the penultimate step in the biosynthesis of riboflavin. This is 6,7-dimethyl-8-ribityllumazine synthase from Chlorobium chlorochromatii (strain CaD3).